The primary structure comprises 786 residues: Phenylalanine--tRNA ligase beta subunit (786 aa).

Residues 39-150 (LRAPDRVVVG…GELKLGKPLH (112 aa)) enclose the tRNA-binding domain. Positions 397-474 (YKPATITVDL…RLLGIDTILA (78 aa)) constitute a B5 domain. Residues Asp-452, Asp-458, Glu-461, and Glu-462 each contribute to the Mg(2+) site. Positions 693-786 (SKFPKLQRDL…LNHRFGAKLR (94 aa)) constitute an FDX-ACB domain.

This sequence belongs to the phenylalanyl-tRNA synthetase beta subunit family. Type 1 subfamily. In terms of assembly, tetramer of two alpha and two beta subunits. Mg(2+) serves as cofactor.

It is found in the cytoplasm. The enzyme catalyses tRNA(Phe) + L-phenylalanine + ATP = L-phenylalanyl-tRNA(Phe) + AMP + diphosphate + H(+). The chain is Phenylalanine--tRNA ligase beta subunit from Wolinella succinogenes (strain ATCC 29543 / DSM 1740 / CCUG 13145 / JCM 31913 / LMG 7466 / NCTC 11488 / FDC 602W) (Vibrio succinogenes).